Here is a 96-residue protein sequence, read N- to C-terminus: Co-chaperonin GroES (96 aa).

The protein belongs to the GroES chaperonin family. As to quaternary structure, heptamer of 7 subunits arranged in a ring. Interacts with the chaperonin GroEL.

It is found in the cytoplasm. In terms of biological role, together with the chaperonin GroEL, plays an essential role in assisting protein folding. The GroEL-GroES system forms a nano-cage that allows encapsulation of the non-native substrate proteins and provides a physical environment optimized to promote and accelerate protein folding. GroES binds to the apical surface of the GroEL ring, thereby capping the opening of the GroEL channel. This chain is Co-chaperonin GroES, found in Shewanella frigidimarina (strain NCIMB 400).